Here is a 137-residue protein sequence, read N- to C-terminus: MKGIDNTAYSYIDDLTCCTRVIMADYLNSDYRYNKDVDLDLVKLFLENGKPHGIMCSIVPLWRNDKETIFLILKTMNSDVLQHILIEYMTFGDIPLVEYGTVVNKEAIHEYFRNINIDSYTMKYLLKKEGRCHQLSR.

This is an uncharacterized protein from Bos taurus (Bovine).